Here is a 664-residue protein sequence, read N- to C-terminus: Lamin tail domain-containing protein 2 (664 aa).

The disordered stretch occupies residues Met-1–Ala-40. The stretch at Gln-118–Gln-169 forms a coiled coil. The span at Ser-245 to Leu-260 shows a compositional bias: polar residues. Disordered regions lie at residues Ser-245–Pro-272 and Thr-286–His-329. Low complexity predominate over residues Thr-286 to Ser-298. Positions Gly-312–Gln-325 are enriched in polar residues. Residues Pro-362–Pro-481 enclose the LTD domain. The disordered stretch occupies residues Ser-504–Thr-563. Over residues Arg-533 to Ser-547 the composition is skewed to basic residues.

The protein is Lamin tail domain-containing protein 2 (Lmntd2) of Mus musculus (Mouse).